A 323-amino-acid chain; its full sequence is Aspartate carbamoyltransferase catalytic subunit (323 aa).

Residues Arg-71 and Thr-72 each coordinate carbamoyl phosphate. Position 99 (Lys-99) interacts with L-aspartate. Carbamoyl phosphate is bound by residues Arg-121, His-151, and Gln-154. 2 residues coordinate L-aspartate: Arg-184 and Arg-239. Carbamoyl phosphate contacts are provided by Gly-280 and Pro-281.

The protein belongs to the aspartate/ornithine carbamoyltransferase superfamily. ATCase family. As to quaternary structure, heterododecamer (2C3:3R2) of six catalytic PyrB chains organized as two trimers (C3), and six regulatory PyrI chains organized as three dimers (R2).

It carries out the reaction carbamoyl phosphate + L-aspartate = N-carbamoyl-L-aspartate + phosphate + H(+). The protein operates within pyrimidine metabolism; UMP biosynthesis via de novo pathway; (S)-dihydroorotate from bicarbonate: step 2/3. In terms of biological role, catalyzes the condensation of carbamoyl phosphate and aspartate to form carbamoyl aspartate and inorganic phosphate, the committed step in the de novo pyrimidine nucleotide biosynthesis pathway. This chain is Aspartate carbamoyltransferase catalytic subunit, found in Ralstonia pickettii (strain 12J).